The primary structure comprises 358 residues: UDP-N-acetylglucosamine--N-acetylmuramyl-(pentapeptide) pyrophosphoryl-undecaprenol N-acetylglucosamine transferase (358 aa).

Residues 10–12 (TGG), N124, R165, S191, I246, and Q291 each bind UDP-N-acetyl-alpha-D-glucosamine.

Belongs to the glycosyltransferase 28 family. MurG subfamily.

It localises to the cell inner membrane. It catalyses the reaction di-trans,octa-cis-undecaprenyl diphospho-N-acetyl-alpha-D-muramoyl-L-alanyl-D-glutamyl-meso-2,6-diaminopimeloyl-D-alanyl-D-alanine + UDP-N-acetyl-alpha-D-glucosamine = di-trans,octa-cis-undecaprenyl diphospho-[N-acetyl-alpha-D-glucosaminyl-(1-&gt;4)]-N-acetyl-alpha-D-muramoyl-L-alanyl-D-glutamyl-meso-2,6-diaminopimeloyl-D-alanyl-D-alanine + UDP + H(+). It participates in cell wall biogenesis; peptidoglycan biosynthesis. Its function is as follows. Cell wall formation. Catalyzes the transfer of a GlcNAc subunit on undecaprenyl-pyrophosphoryl-MurNAc-pentapeptide (lipid intermediate I) to form undecaprenyl-pyrophosphoryl-MurNAc-(pentapeptide)GlcNAc (lipid intermediate II). This chain is UDP-N-acetylglucosamine--N-acetylmuramyl-(pentapeptide) pyrophosphoryl-undecaprenol N-acetylglucosamine transferase, found in Citrifermentans bemidjiense (strain ATCC BAA-1014 / DSM 16622 / JCM 12645 / Bem) (Geobacter bemidjiensis).